Consider the following 150-residue polypeptide: Cytochrome b5 type B (150 aa).

The propeptide occupies 1-15; that stretch reads MSGSMATAEASGSDG. The tract at residues 1-21 is disordered; sequence MSGSMATAEASGSDGKGQEVE. Serine 23 bears the Phosphoserine mark. The 77-residue stretch at 24-100 folds into the Cytochrome b5 heme-binding domain; it reads VTYYRMEEVA…LKQYYIGDIH (77 aa). Lysine 34 is modified (N6-acetyllysine). Serine 37 is modified (phosphoserine). Lysine 39 is subject to N6-methyllysine. Residues histidine 59 and histidine 83 each contribute to the heme site. Serine 84 is modified (phosphoserine). Residues 122–144 traverse the membrane as a helical segment; that stretch reads CWAYWILPIIGAVLLGFLYRYYT.

This sequence belongs to the cytochrome b5 family. Component of a complex composed of cytochrome b5, NADH-cytochrome b5 reductase (CYB5R3) and MTARC2.

It is found in the mitochondrion outer membrane. Its function is as follows. Cytochrome b5 is a membrane-bound hemoprotein functioning as an electron carrier for several membrane-bound oxygenases. The chain is Cytochrome b5 type B (CYB5B) from Pongo abelii (Sumatran orangutan).